A 258-amino-acid polypeptide reads, in one-letter code: Thiazole synthase (258 aa).

The active-site Schiff-base intermediate with DXP is Lys96. Residues Gly157, 183-184 (AG), and 205-206 (NT) contribute to the 1-deoxy-D-xylulose 5-phosphate site.

Belongs to the ThiG family. Homotetramer. Forms heterodimers with either ThiH or ThiS.

It localises to the cytoplasm. It catalyses the reaction [ThiS sulfur-carrier protein]-C-terminal-Gly-aminoethanethioate + 2-iminoacetate + 1-deoxy-D-xylulose 5-phosphate = [ThiS sulfur-carrier protein]-C-terminal Gly-Gly + 2-[(2R,5Z)-2-carboxy-4-methylthiazol-5(2H)-ylidene]ethyl phosphate + 2 H2O + H(+). It functions in the pathway cofactor biosynthesis; thiamine diphosphate biosynthesis. Catalyzes the rearrangement of 1-deoxy-D-xylulose 5-phosphate (DXP) to produce the thiazole phosphate moiety of thiamine. Sulfur is provided by the thiocarboxylate moiety of the carrier protein ThiS. In vitro, sulfur can be provided by H(2)S. This is Thiazole synthase from Alkaliphilus metalliredigens (strain QYMF).